Reading from the N-terminus, the 164-residue chain is MGEVRVVGIRVEQPQNQPVLLLREANGDRYLPIWIGQSEAAAIALEQQGVEPPRPLTHDLIRDLIAALGHSLKEVRIVDLQEGTFYADLIFDRNIKVSARPSDSVAIALRVGVPIYVEEAVLAQAGLLIPDESDEEATTAVREDEVEKFKEFLDSVSPDDFKAT.

The BFN domain occupies Met1 to Ile129.

This is an uncharacterized protein from Mycobacterium tuberculosis (strain CDC 1551 / Oshkosh).